Consider the following 264-residue polypeptide: MAAPGEALTPQGYIQHHLTNLHVGEGFWTWHIDSLFFSVGLGVLFLWIFRSVGKKATSGVPGKLQCFIEMIVEFVDNSVKESFHGRNALIAPLALTIFMWVFMMNFMDMIPVDWLPWLASLAGIPYLKVVPTTDVNITFSLAIGVFVLIIYYSIKVKGVSGFVKELTLQPFNHKAMIPVNLLLETVTLIAKPISLALRLFGNLYAGELIFILIALMYGTNLLLSSLGVTLQLGWLIFHILVITLQAFIFMMLTIVYLSMAHEDH.

6 helical membrane-spanning segments follow: residues 29 to 49, 90 to 110, 134 to 154, 177 to 197, 208 to 228, and 235 to 255; these read TWHI…LWIF, IAPL…MDMI, DVNI…YYSI, IPVN…SLAL, LIFI…SLGV, and LIFH…LTIV.

The protein belongs to the ATPase A chain family. F-type ATPases have 2 components, CF(1) - the catalytic core - and CF(0) - the membrane proton channel. CF(1) has five subunits: alpha(3), beta(3), gamma(1), delta(1), epsilon(1). CF(0) has three main subunits: a(1), b(2) and c(9-12). The alpha and beta chains form an alternating ring which encloses part of the gamma chain. CF(1) is attached to CF(0) by a central stalk formed by the gamma and epsilon chains, while a peripheral stalk is formed by the delta and b chains.

It is found in the cell inner membrane. Key component of the proton channel; it plays a direct role in the translocation of protons across the membrane. The sequence is that of ATP synthase subunit a from Shewanella oneidensis (strain ATCC 700550 / JCM 31522 / CIP 106686 / LMG 19005 / NCIMB 14063 / MR-1).